Here is a 304-residue protein sequence, read N- to C-terminus: Glycine--tRNA ligase alpha subunit (304 aa).

This sequence belongs to the class-II aminoacyl-tRNA synthetase family. Tetramer of two alpha and two beta subunits.

It is found in the cytoplasm. The enzyme catalyses tRNA(Gly) + glycine + ATP = glycyl-tRNA(Gly) + AMP + diphosphate. This is Glycine--tRNA ligase alpha subunit from Pectobacterium carotovorum subsp. carotovorum (strain PC1).